The primary structure comprises 131 residues: Leptin receptor gene-related protein (131 aa).

Helical transmembrane passes span 7-27 (LVALSFSGAIGLTFLMLGCAL), 32-52 (VYWPLFVLIFYVISPIPYFIA), 69-89 (LAYFFTTGIVVSAFGLPVVLA), and 100-120 (GLVLAGNAVIFLTIQGFFLVF).

The protein belongs to the OB-RGRP/VPS55 family. As to quaternary structure, interacts with LEPR. Interacts with RAB13. In terms of tissue distribution, widely distributed in the brain, with elevated expression in the hypothalamic regions, including the paraventricular nucleus. In the placenta, present at high levels in the junctional zone situated towards the maternal aspect and throughout the labyrinth zone in close proximity to the developing fetus.

It localises to the golgi apparatus membrane. It is found in the endosome membrane. Its function is as follows. Negatively regulates leptin receptor (LEPR) cell surface expression, and thus decreases response to leptin. Negatively regulates growth hormone (GH) receptor cell surface expression in liver. May play a role in liver resistance to GH during periods of reduced nutrient availability. The protein is Leptin receptor gene-related protein (Leprot) of Mus musculus (Mouse).